A 309-amino-acid chain; its full sequence is Bombesin receptor-activated protein C6orf89 homolog (309 aa).

The Cytoplasmic portion of the chain corresponds to 1-59; that stretch reads MGSSLSEPCIYDKLSESIDILRQSGYRYGMSEREIEKFIKQVLETNEPRREPPQFPILR. A helical membrane pass occupies residues 60 to 80; sequence ATVKFVVAVGVVLMAVLVFTY. Topologically, residues 81-309 are extracellular; sequence PQSPVLMGSV…QDVQCDSAVL (229 aa).

In terms of assembly, homodimer.

It localises to the golgi apparatus membrane. The protein localises to the cytoplasm. Exhibits histone deacetylase (HDAC) enhancer properties. May play a role in progression through the cell cycle. The sequence is that of Bombesin receptor-activated protein C6orf89 homolog from Danio rerio (Zebrafish).